Consider the following 131-residue polypeptide: Glycine cleavage system H protein (131 aa).

The Lipoyl-binding domain maps to 24 to 106; it reads IATIGISAFA…YGEGWLLKLR (83 aa). K65 carries the post-translational modification N6-lipoyllysine.

Belongs to the GcvH family. In terms of assembly, the glycine cleavage system is composed of four proteins: P, T, L and H. The cofactor is (R)-lipoate.

The glycine cleavage system catalyzes the degradation of glycine. The H protein shuttles the methylamine group of glycine from the P protein to the T protein. This chain is Glycine cleavage system H protein, found in Gloeothece citriformis (strain PCC 7424) (Cyanothece sp. (strain PCC 7424)).